The sequence spans 91 residues: MSITTERKQQLIKEYAITENDTGSSAVQCAILTERINNLTEHFKSNHKDHTSRRGLLILVGRRRRLLNYIKKNNVSEYLDLITKLGIRKIK.

The protein belongs to the universal ribosomal protein uS15 family. Part of the 30S ribosomal subunit. Forms a bridge to the 50S subunit in the 70S ribosome, contacting the 23S rRNA.

One of the primary rRNA binding proteins, it binds directly to 16S rRNA where it helps nucleate assembly of the platform of the 30S subunit by binding and bridging several RNA helices of the 16S rRNA. Functionally, forms an intersubunit bridge (bridge B4) with the 23S rRNA of the 50S subunit in the ribosome. The chain is Small ribosomal subunit protein uS15 from Rickettsia typhi (strain ATCC VR-144 / Wilmington).